The primary structure comprises 1119 residues: DNA-directed RNA polymerase subunit beta (1119 aa).

It belongs to the RNA polymerase beta chain family. The RNAP catalytic core consists of 2 alpha, 1 beta, 1 beta' and 1 omega subunit. When a sigma factor is associated with the core the holoenzyme is formed, which can initiate transcription.

It carries out the reaction RNA(n) + a ribonucleoside 5'-triphosphate = RNA(n+1) + diphosphate. Functionally, DNA-dependent RNA polymerase catalyzes the transcription of DNA into RNA using the four ribonucleoside triphosphates as substrates. This Thermus thermophilus (strain ATCC BAA-163 / DSM 7039 / HB27) protein is DNA-directed RNA polymerase subunit beta.